Consider the following 449-residue polypeptide: Cytochrome P450 2E1 (449 aa).

A substrate-binding site is contributed by 254 to 259; it reads FAGTET. Cysteine 393 serves as a coordination point for heme.

The protein belongs to the cytochrome P450 family. As to quaternary structure, interacts with chaperones HSP70 and HSP90; this interaction is required for initial targeting to mitochondria. The cofactor is heme.

It is found in the endoplasmic reticulum membrane. Its subcellular location is the microsome membrane. The protein localises to the mitochondrion inner membrane. It catalyses the reaction an organic molecule + reduced [NADPH--hemoprotein reductase] + O2 = an alcohol + oxidized [NADPH--hemoprotein reductase] + H2O + H(+). The catalysed reaction is (5Z,8Z,11Z)-eicosatrienoate + reduced [NADPH--hemoprotein reductase] + O2 = 19-hydroxy-(5Z,8Z,11Z)-eicosatrienoate + oxidized [NADPH--hemoprotein reductase] + H2O + H(+). It carries out the reaction (5Z,8Z,11Z,14Z,17Z)-eicosapentaenoate + reduced [NADPH--hemoprotein reductase] + O2 = 19-hydroxy-(5Z,8Z,11Z,14Z,17Z)-eicosapentaenoate + oxidized [NADPH--hemoprotein reductase] + H2O + H(+). The enzyme catalyses (4Z,7Z,10Z,13Z,16Z,19Z)-docosahexaenoate + reduced [NADPH--hemoprotein reductase] + O2 = 21-hydroxy-(4Z,7Z,10Z,13Z,16Z,19Z)-docosahexaenoate + oxidized [NADPH--hemoprotein reductase] + H2O + H(+). It catalyses the reaction dodecanoate + reduced [NADPH--hemoprotein reductase] + O2 = 11-hydroxydodecanoate + oxidized [NADPH--hemoprotein reductase] + H2O + H(+). The catalysed reaction is tetradecanoate + reduced [NADPH--hemoprotein reductase] + O2 = 13-hydroxytetradecanoate + oxidized [NADPH--hemoprotein reductase] + H2O + H(+). It carries out the reaction 4-nitrophenol + NADPH + O2 + H(+) = 4-nitrocatechol + NADP(+) + H2O. It participates in lipid metabolism; fatty acid metabolism. With respect to regulation, the omega-1 hydroxylase activity is stimulated by cytochrome b5. Its function is as follows. A cytochrome P450 monooxygenase involved in the metabolism of fatty acids. Mechanistically, uses molecular oxygen inserting one oxygen atom into a substrate, and reducing the second into a water molecule, with two electrons provided by NADPH via cytochrome P450 reductase (NADPH--hemoprotein reductase). Catalyzes the hydroxylation of carbon-hydrogen bonds. Hydroxylates fatty acids specifically at the omega-1 position displaying the highest catalytic activity for saturated fatty acids. May be involved in the oxidative metabolism of xenobiotics. This is Cytochrome P450 2E1 (CYP2E1) from Macaca fascicularis (Crab-eating macaque).